The following is a 282-amino-acid chain: Shikimate kinase (282 aa).

Residue 86–96 coordinates ATP; it reads PIKSGLSSSSA.

Belongs to the GHMP kinase family. Archaeal shikimate kinase subfamily.

It is found in the cytoplasm. The enzyme catalyses shikimate + ATP = 3-phosphoshikimate + ADP + H(+). Its pathway is metabolic intermediate biosynthesis; chorismate biosynthesis; chorismate from D-erythrose 4-phosphate and phosphoenolpyruvate: step 5/7. The chain is Shikimate kinase (aroK) from Methanocaldococcus jannaschii (strain ATCC 43067 / DSM 2661 / JAL-1 / JCM 10045 / NBRC 100440) (Methanococcus jannaschii).